The following is a 271-amino-acid chain: Virulence regulon transcriptional activator VirF (271 aa).

In terms of domain architecture, HTH araC/xylS-type spans 167-265 (ERLQKFMEEN…GCTPSQARLT (99 aa)). DNA-binding regions (H-T-H motif) lie at residues 184–205 (SKFA…GTVY) and 232–255 (IVDI…RRRF).

Functionally, transcriptional activator of the Yersinia virulence regulon. The chain is Virulence regulon transcriptional activator VirF (virF) from Yersinia enterocolitica.